The chain runs to 142 residues: Large ribosomal subunit protein uL13 (142 aa).

The protein belongs to the universal ribosomal protein uL13 family. In terms of assembly, part of the 50S ribosomal subunit.

Functionally, this protein is one of the early assembly proteins of the 50S ribosomal subunit, although it is not seen to bind rRNA by itself. It is important during the early stages of 50S assembly. This chain is Large ribosomal subunit protein uL13, found in Xylella fastidiosa (strain M23).